Reading from the N-terminus, the 264-residue chain is Membrane-spanning 4-domains subfamily A member 10 (264 aa).

Topologically, residues 1–57 (MKAEATVIPSRCARGQTTAAPGVQPWQTSVPQNTTQPKLLAPRQHEKSQKRSSLLKE) are cytoplasmic. Positions 17-37 (TTAAPGVQPWQTSVPQNTTQP) are enriched in polar residues. Residues 17-48 (TTAAPGVQPWQTSVPQNTTQPKLLAPRQHEKS) are disordered. A helical transmembrane segment spans residues 58–78 (LGAFHITIALLHLVFGGYLAS). At 79-89 (TVKSLHLVVLK) the chain is on the extracellular side. A helical membrane pass occupies residues 90–110 (SWYPFWGAASFLISGILAITM). Over 111-119 (KTFSKTYLK) the chain is Cytoplasmic. Residues 120–140 (MLCLMTNLVSLFCVLSGLFVI) traverse the membrane as a helical segment. The Extracellular portion of the chain corresponds to 141 to 169 (SKDLFLESPFESPIWRMYPNSTVHIQRLE). The chain crosses the membrane as a helical span at residues 170–190 (LALLCFTVLELFLPVPTAVTA). The Cytoplasmic segment spans residues 191–264 (WRDRPSAKND…GAGIWTQTAN (74 aa)).

This sequence belongs to the MS4A family.

It localises to the membrane. In terms of biological role, may be involved in signal transduction as a component of a multimeric receptor complex. The sequence is that of Membrane-spanning 4-domains subfamily A member 10 (MS4A10) from Pongo abelii (Sumatran orangutan).